We begin with the raw amino-acid sequence, 244 residues long: 5-oxoprolinase subunit A (244 aa).

This sequence belongs to the LamB/PxpA family. As to quaternary structure, forms a complex composed of PxpA, PxpB and PxpC.

The enzyme catalyses 5-oxo-L-proline + ATP + 2 H2O = L-glutamate + ADP + phosphate + H(+). Its function is as follows. Catalyzes the cleavage of 5-oxoproline to form L-glutamate coupled to the hydrolysis of ATP to ADP and inorganic phosphate. This chain is 5-oxoprolinase subunit A, found in Escherichia coli O6:K15:H31 (strain 536 / UPEC).